The following is a 278-amino-acid chain: Hydroxyethylthiazole kinase (278 aa).

Met49 serves as a coordination point for substrate. The ATP site is built by Asn125 and Ser171. Substrate is bound at residue Gly198.

It belongs to the Thz kinase family. It depends on Mg(2+) as a cofactor.

It catalyses the reaction 5-(2-hydroxyethyl)-4-methylthiazole + ATP = 4-methyl-5-(2-phosphooxyethyl)-thiazole + ADP + H(+). It functions in the pathway cofactor biosynthesis; thiamine diphosphate biosynthesis; 4-methyl-5-(2-phosphoethyl)-thiazole from 5-(2-hydroxyethyl)-4-methylthiazole: step 1/1. Its function is as follows. Catalyzes the phosphorylation of the hydroxyl group of 4-methyl-5-beta-hydroxyethylthiazole (THZ). This is Hydroxyethylthiazole kinase from Natronomonas pharaonis (strain ATCC 35678 / DSM 2160 / CIP 103997 / JCM 8858 / NBRC 14720 / NCIMB 2260 / Gabara) (Halobacterium pharaonis).